A 103-amino-acid polypeptide reads, in one-letter code: Large ribosomal subunit protein bL21 (103 aa).

Belongs to the bacterial ribosomal protein bL21 family. As to quaternary structure, part of the 50S ribosomal subunit. Contacts protein L20.

In terms of biological role, this protein binds to 23S rRNA in the presence of protein L20. The chain is Large ribosomal subunit protein bL21 from Shewanella piezotolerans (strain WP3 / JCM 13877).